A 176-amino-acid chain; its full sequence is NAD(P)H-quinone oxidoreductase subunit 6, chloroplastic (176 aa).

Helical transmembrane passes span Ile-10 to Thr-30, Ile-33 to Leu-53, Val-60 to Phe-80, Ile-95 to Ile-115, and Phe-152 to Thr-172.

Belongs to the complex I subunit 6 family. As to quaternary structure, NDH is composed of at least 16 different subunits, 5 of which are encoded in the nucleus.

The protein resides in the plastid. It localises to the chloroplast thylakoid membrane. It carries out the reaction a plastoquinone + NADH + (n+1) H(+)(in) = a plastoquinol + NAD(+) + n H(+)(out). The enzyme catalyses a plastoquinone + NADPH + (n+1) H(+)(in) = a plastoquinol + NADP(+) + n H(+)(out). Its function is as follows. NDH shuttles electrons from NAD(P)H:plastoquinone, via FMN and iron-sulfur (Fe-S) centers, to quinones in the photosynthetic chain and possibly in a chloroplast respiratory chain. The immediate electron acceptor for the enzyme in this species is believed to be plastoquinone. Couples the redox reaction to proton translocation, and thus conserves the redox energy in a proton gradient. The sequence is that of NAD(P)H-quinone oxidoreductase subunit 6, chloroplastic (ndhG) from Saccharum hybrid (Sugarcane).